The following is a 322-amino-acid chain: Mitochondrial thiamine pyrophosphate carrier 1 (322 aa).

Solcar repeat units lie at residues 12–111, 122–208, and 215–310; these read GSKT…VTLG, PAAA…LRLP, and PFGS…VLGI. A run of 6 helical transmembrane segments spans residues 18–38, 92–108, 128–148, 180–200, 221–241, and 285–302; these read MIAGATAGLIARFVIAPLDVV, LMYVSYSAIQFTTYRSV, FIAGASAGAVATTATYPLDLL, FFQGLGAGVGQIVPYMGIFFA, ASAGVIASVIAKTGIFPFDLI, and GLTVSLFKSAPASAVTMW.

It belongs to the mitochondrial carrier (TC 2.A.29) family.

The protein resides in the mitochondrion inner membrane. Functionally, mitochondrial transporter that mediates uptake of thiamine pyrophosphate (ThPP) into mitochondria. This is Mitochondrial thiamine pyrophosphate carrier 1 (tpc1) from Botryotinia fuckeliana (strain B05.10) (Noble rot fungus).